Here is a 310-residue protein sequence, read N- to C-terminus: Melanocyte-stimulating hormone receptor (310 aa).

Topologically, residues 1-37 (MPMQGAQRKLLGSLNSTPTATSNLGLAANRTGAPCLE) are extracellular. Asn29 carries an N-linked (GlcNAc...) asparagine glycan. The helical transmembrane segment at 38 to 63 (LPIPDGLFLSLGLVSLVENVLVVAAI) threads the bilayer. Topologically, residues 64–72 (AKNRNLHSS) are cytoplasmic. The chain crosses the membrane as a helical span at residues 73-93 (MYCFICCLALSDLLVSGSNML). Topologically, residues 94–110 (EAGVLATRASVVQQLHN) are extracellular. Residues 111–132 (TIDVLTCSSMLCSLCFLGAIAV) traverse the membrane as a helical segment. Over 133 to 155 (DRYISIFYALRYHSIMTLPRAQR) the chain is Cytoplasmic. A helical transmembrane segment spans residues 156-175 (AVAAIWVASVLSSTLFITYY). At 176 to 183 (DHAAVLLC) the chain is on the extracellular side. The helical transmembrane segment at 184-203 (LVVFFLAMLVLMAVLYVHML) threads the bilayer. The Cytoplasmic segment spans residues 204–232 (AWACQHAQGIIRLHKRQPPAHKGFGLRGA). Residues 233-258 (ATLTILLGIFFLCWGPFFLRLTLVVF) form a helical membrane-spanning segment. Over 259–271 (CPQHLTCNCIFKN) the chain is Extracellular. The helical transmembrane segment at 272–292 (FKVFLTLIICNTIIDPLIYAF) threads the bilayer. The Cytoplasmic segment spans residues 293-310 (RSQELRRTLKEVLGRGRW).

The protein belongs to the G-protein coupled receptor 1 family. Interacts with MGRN1, but does not undergo MGRN1-mediated ubiquitination; this interaction competes with GNAS-binding and thus inhibits agonist-induced cAMP production. Interacts with OPN3; the interaction results in a decrease in MC1R-mediated cAMP signaling and ultimately a decrease in melanin production in melanocytes.

The protein resides in the cell membrane. Receptor for MSH (alpha, beta and gamma) and ACTH. The activity of this receptor is mediated by G proteins which activate adenylate cyclase. Mediates melanogenesis, the production of eumelanin (black/brown) and phaeomelanin (red/yellow), via regulation of cAMP signaling in melanocytes. The chain is Melanocyte-stimulating hormone receptor (MC1R) from Leontopithecus chrysomelas (Golden-headed lion tamarin).